We begin with the raw amino-acid sequence, 236 residues long: B-cell antigen receptor complex-associated protein alpha chain (236 aa).

Residues 1 to 32 form the signal peptide; sequence MPGGPGLLQALCATTFLLFLISAGGLGPGSQA. Residues 33-122 enclose the Ig-like C2-type domain; it reads LWVDGGPPSM…EKDLNQKILS (90 aa). The Extracellular segment spans residues 33-151; the sequence is LWVDGGPPSM…LDMGEGTKNN (119 aa). A disulfide bond links Cys54 and Cys109. N-linked (GlcNAc...) asparagine glycosylation is found at Asn66 and Asn76. A helical membrane pass occupies residues 152–172; sequence IITAEGIILLFCAVVPGTLLL. Over 173 to 236 the chain is Cytoplasmic; it reads FRKRWQNMKF…GDGDVQLEKP (64 aa). One can recognise an ITAM domain in the interval 185-213; it reads DAQDDYEDENLYEGLNLDDCSMYEDISRG. Tyr196 carries the post-translational modification Phosphotyrosine; by SRC-type Tyr-kinases. Tyr207 bears the Phosphotyrosine mark. Arg212 carries the post-translational modification Asymmetric dimethylarginine; by PRMT1. Tyr218 carries the post-translational modification Phosphotyrosine; by Tyr-kinases.

As to quaternary structure, heterodimer of alpha and beta chains; disulfide-linked. Part of the B-cell antigen receptor complex where the alpha/beta chain heterodimer is non-covalently associated with an antigen-specific membrane-bound surface immunoglobulin of two heavy chains and two light chains. Interacts through its phosphorylated ITAM domain with the SH2 domains of SYK which stimulates SYK autophosphorylation and activation. Also interacts, when phosphorylated on Tyr-207, with the SH2 domain of BLNK/SLP65, bringing BLNK into proximity with SYK and allowing SYK to phosphorylate BLNK which is necessary for trafficking of the BCR to late endosomes. Interacts with Src-family tyrosine kinases including FYN and LYN, increasing their activity. Post-translationally, phosphorylated on tyrosine, serine and threonine residues upon B-cell activation. Phosphorylation of tyrosine residues by Src-family kinases, including LYN, is an early and essential feature of the BCR signaling cascade. The phosphorylated tyrosines serve as docking sites for SH2-domain containing kinases, leading to their activation which in turn leads to phosphorylation of downstream targets. Phosphorylation of serine and threonine residues may prevent subsequent tyrosine phosphorylation. Arginine methylation in the ITAM domain may interfere with the binding of SYK. It promotes signals leading to B-cell differentiation.

It localises to the cell membrane. In terms of biological role, required in cooperation with CD79B for initiation of the signal transduction cascade activated by binding of antigen to the B-cell antigen receptor complex (BCR) which leads to internalization of the complex, trafficking to late endosomes and antigen presentation. Also required for BCR surface expression and for efficient differentiation of pro- and pre-B-cells. Stimulates SYK autophosphorylation and activation. Binds to BLNK, bringing BLNK into proximity with SYK and allowing SYK to phosphorylate BLNK. Also interacts with and increases activity of some Src-family tyrosine kinases. Represses BCR signaling during development of immature B-cells. This is B-cell antigen receptor complex-associated protein alpha chain (CD79A) from Canis lupus familiaris (Dog).